Reading from the N-terminus, the 352-residue chain is N-terminal EF-hand calcium-binding protein 1 (352 aa).

Serine 4 is modified (phosphoserine). 2 EF-hand domains span residues lysine 26–serine 61 and leucine 60–glutamate 95. Residues aspartate 39, asparagine 41, aspartate 43, lysine 45, and glutamate 50 each contribute to the Ca(2+) site. The stretch at leucine 135 to glutamine 163 forms a coiled coil. The disordered stretch occupies residues glycine 180–valine 202. The span at histidine 190–valine 202 shows a compositional bias: polar residues. A phosphoserine mark is found at serine 192 and serine 197. Positions glutamate 209–tyrosine 275 form a coiled coil. One can recognise an ABM domain in the interval methionine 252–methionine 340.

In terms of assembly, interacts with STX1. May interact with CPNE6.

The protein resides in the cytoplasm. The polypeptide is N-terminal EF-hand calcium-binding protein 1 (NECAB1) (Pongo abelii (Sumatran orangutan)).